We begin with the raw amino-acid sequence, 277 residues long: MKISLNGISVQHPSAKPGAVPALREQNLTVRAGEQLAIIGPSGAGKTTLLHLLACALKPSAGSMLLNDQDPWQLSRGALQKLRGALFLAPQVPPLPPRQRVVTAVLAGRLPNESLWASLRSLFYPTDIALAERALAGFDVGDKLFDRVDRLSGGERQRVGLARALVSQASLILVDEPLSALDPTRSQHAIETLTRAAQERGATLVATLHHVEMALAHFPRIVGLRDGQVAFDLPAAEVTPELLQALYAQHLHELTGLANLEADDLPTDPAPVVMHCR.

Residues 3–251 (ISLNGISVQH…LLQALYAQHL (249 aa)) enclose the ABC transporter domain. An ATP-binding site is contributed by 40–47 (GPSGAGKT).

The protein belongs to the ABC transporter superfamily. Phosphonates importer (TC 3.A.1.9.1) family. As to quaternary structure, the complex is composed of two ATP-binding proteins (PhnC), two transmembrane proteins (PhnE) and a solute-binding protein (PhnD).

The protein resides in the cell inner membrane. The enzyme catalyses phosphonate(out) + ATP + H2O = phosphonate(in) + ADP + phosphate + H(+). Part of the ABC transporter complex PhnCDE involved in phosphonates import. Responsible for energy coupling to the transport system. In Albidiferax ferrireducens (strain ATCC BAA-621 / DSM 15236 / T118) (Rhodoferax ferrireducens), this protein is Phosphonates import ATP-binding protein PhnC 2.